The primary structure comprises 607 residues: Zinc finger protein 750 (607 aa).

The CCHC-type zinc finger occupies 25–51 (YQCFQCPFTCNIKSHLFNHMKYNLCKN). Zn(2+) is bound by residues cysteine 27, cysteine 30, histidine 43, and cysteine 49. A compositionally biased stretch (polar residues) spans 60-78 (MEQTGKASRASQHSPAFSH). Disordered regions lie at residues 60–133 (MEQT…DKSE), 318–467 (RAVQ…SSQE), 482–511 (QALP…QDLE), and 575–607 (GQKR…SQNC). Composition is skewed to basic and acidic residues over residues 79–133 (NSKE…DKSE) and 318–334 (RAVQ…RESP). The segment covering 369–380 (HSGSQSHIISGS) has biased composition (low complexity). Positions 421-432 (DKEEDEETEEEI) are enriched in acidic residues. A compositionally biased stretch (basic and acidic residues) spans 452–462 (HYPDRELHYDS). The segment covering 496–507 (ISNAEVSTTESP) has biased composition (polar residues). Residues 579 to 592 (ANNRPLRHTNKRAK) are compositionally biased toward basic residues.

The protein localises to the nucleus. Its function is as follows. Transcription factor involved in epidermis differentiation. The polypeptide is Zinc finger protein 750 (znf750) (Danio rerio (Zebrafish)).